The following is a 333-amino-acid chain: Bifunctional phosphoglucose/phosphomannose isomerase (333 aa).

Residues 22–160 (LEGALEGVEE…SGALGVDLEA (139 aa)) enclose the SIS domain. The D-fructose 6-phosphate site is built by Gly39, Ser40, Ser84, Ser86, Thr89, and Arg136. The Proton acceptor role is filled by Glu211. Residues His227 and Lys322 each contribute to the D-fructose 6-phosphate site. Catalysis depends on His227, which acts as the Proton donor. The active-site Proton acceptor is the Lys322.

This sequence belongs to the PGI/PMI family. In terms of assembly, homodimer.

It catalyses the reaction alpha-D-glucose 6-phosphate = beta-D-fructose 6-phosphate. It carries out the reaction D-mannose 6-phosphate = D-fructose 6-phosphate. Its activity is regulated as follows. Inhibited by low concentrations of erythrose 4-phosphate and 6-phosphogluconate. Its function is as follows. Dual specificity isomerase that catalyzes the isomerization of both glucose-6-phosphate and mannose-6-phosphate to fructose-6-phosphate with similar catalytic efficiency. The protein is Bifunctional phosphoglucose/phosphomannose isomerase of Aeropyrum pernix (strain ATCC 700893 / DSM 11879 / JCM 9820 / NBRC 100138 / K1).